Consider the following 438-residue polypeptide: MAEISSVPFAEPPYLRGLPSPYYNESHRRFQKACRAFLYENLLKHAMEWEKAGTVPEHVFSDFCKANMLLPNLPAPLPVAWLKRLGIHDILGVKVEEWDYLHTGIYSDEMARSGLSGPSGSLTAGFAFGTPPIIKYGSKELQEKFLPDLLTGKKRNCIAITEPDAGSDVAGITTTATKSADGKYYIVNGNKKWITNGIWSDYSTMAVRTGGPGAGGLSLLVVPLKNYPGVTMQRLKVSGQITGGTTYIELDEVKVPVENLIGLEGDGMKMIMNNFNHERLTIAVGVTRQARVALSTAFSYCLKREAFGKTLMDQPVVRHRLAKAGAELETMWAFVEQLLYQLTNLPKEEADRQLGGITAMAKAKGAMVLNECAQTAVLLFGGAGFTKQGQGELAEAILRDVPGARIPGGSEDVLLDLSIRQLVKLFKAEEKKLGKARI.

The protein belongs to the acyl-CoA dehydrogenase family. Requires FAD as cofactor.

It participates in secondary metabolite biosynthesis. Acyl-CoA dehydrogenase; part of the gene cluster that mediates the biosynthesis of aspyridones. The polyketide-amino acid backbone preaspyridone A is first assembled by the PKS-NRPS hybrid apdA. The assembly of preaspyridone A is initiated by loading of malonyl-CoA onto apdA, followed by decarboxylation to yield the acetyl starter unit. The growing polyketide chain then elongates into a tetraketide. The adpA PKS module catalyzes three Claisen condensations, as well as beta-keto processing and methylation. Alpha-methylation step during polyketide synthesis is a prerequisite and a key checkpoint for chain transfer between PKS and NRPS modules. The downstream NRPS module contains the condensation (C), adenylation (A), and thiolation (T) domains and catalyzes the incorporation of tyrosine via the formation of the L-tyrosinyl-thioester and the amide linkage between L-tyrosinyl-thioester and the tetraketide. The bimodular assembly line is terminated with a reductase (R) domain that facilitates formation and release of the tetramic acid product. Because apdA lacks a designated enoylreductase (ER) domain, the required activity is provided the enoyl reductase apdC. ApdC appears to operate with different stereoselectivity in different PKS cycle. Combined with apdC, apdA is proposed to synthesize preaspyridone A via about 20 enzymatic steps. A number of oxidative steps performed successively by the cytochrome P450 monooxygenases apdE and apdB are required for the conversion of preaspyridone A to aspyridone A. The cytochrome P450 monooxygenase apdE is responsible for the oxidative dephenylation of preaspyridone A. Finally, the predicted FAD-dependent monooxygenase apdD and the acyl-CoA dehydrogenase apdG may be involved in the transformation of aspyridone A into aspyridone B. This Emericella nidulans (strain FGSC A4 / ATCC 38163 / CBS 112.46 / NRRL 194 / M139) (Aspergillus nidulans) protein is Acyl-CoA dehydrogenase apdG.